A 163-amino-acid chain; its full sequence is Large ribosomal subunit protein bL19 (163 aa).

Over residues 131–150 (ISQERKASGKDQASKPEVRP) the composition is skewed to basic and acidic residues. Residues 131–163 (ISQERKASGKDQASKPEVRPQGKKPAPKPKAKK) form a disordered region. The span at 151 to 163 (QGKKPAPKPKAKK) shows a compositional bias: basic residues.

The protein belongs to the bacterial ribosomal protein bL19 family.

Its function is as follows. This protein is located at the 30S-50S ribosomal subunit interface and may play a role in the structure and function of the aminoacyl-tRNA binding site. This is Large ribosomal subunit protein bL19 from Rhodospirillum rubrum (strain ATCC 11170 / ATH 1.1.1 / DSM 467 / LMG 4362 / NCIMB 8255 / S1).